The sequence spans 206 residues: uncharacterized protein (206 aa).

A helical transmembrane segment spans residues 4–24; the sequence is LLVVIAVALFIAAIVVLVVAI.

Its subcellular location is the membrane. This is an uncharacterized protein from Mycobacterium tuberculosis (strain CDC 1551 / Oshkosh).